The following is a 335-amino-acid chain: tRNA (guanine(6)-N2)-methyltransferase (335 aa).

The region spanning 47-150 is the THUMP domain; sequence EALGLRLAHH…GEEAFLGVQL (104 aa). Residues 195–197, 243–244, and asparagine 260 each bind S-adenosyl-L-methionine; these read SGT and DA.

It belongs to the methyltransferase superfamily. As to quaternary structure, monomer in solution.

It localises to the cytoplasm. The catalysed reaction is guanosine(6) in tRNA + S-adenosyl-L-methionine = N(2)-methylguanosine(6) in tRNA + S-adenosyl-L-homocysteine + H(+). S-adenosyl-L-methionine-dependent methyltransferase that catalyzes the methylation of the guanosine nucleotide at position 6 (m2G6) in tRNA(Phe). This is tRNA (guanine(6)-N2)-methyltransferase from Thermus thermophilus (strain ATCC BAA-163 / DSM 7039 / HB27).